Consider the following 40-residue polypeptide: Natriuretic peptide HsNP-b (40 aa).

The propeptide occupies 1–8 (SGSKTAKI). Residues 1–40 (SGSKTAKIGDGCFGVPIDHIGSTTDLGCGRPRPKPTPRGS) form a disordered region. C12 and C28 are joined by a disulfide. Positions 31–40 (PRPKPTPRGS) are enriched in basic residues.

The protein belongs to the natriuretic peptide family. As to expression, expressed by the venom gland.

It localises to the secreted. Functionally, snake venom natriuretic peptide that targets both NPR1 and NPR2. Exhibits hypotensive and vasodepressor activities. This chain is Natriuretic peptide HsNP-b, found in Hoplocephalus stephensii (Stephens's banded snake).